Reading from the N-terminus, the 409-residue chain is DNA polymerase IV 2 (409 aa).

The UmuC domain maps to 5–190 (IFMVDMESFF…LPIECLYGVG (186 aa)). Aspartate 9 and aspartate 105 together coordinate Mg(2+). Residue glutamate 106 is part of the active site.

The protein belongs to the DNA polymerase type-Y family. Monomer. The cofactor is Mg(2+).

Its subcellular location is the cytoplasm. It catalyses the reaction DNA(n) + a 2'-deoxyribonucleoside 5'-triphosphate = DNA(n+1) + diphosphate. Its function is as follows. Poorly processive, error-prone DNA polymerase involved in untargeted mutagenesis. Copies undamaged DNA at stalled replication forks, which arise in vivo from mismatched or misaligned primer ends. These misaligned primers can be extended by PolIV. Exhibits no 3'-5' exonuclease (proofreading) activity. May be involved in translesional synthesis, in conjunction with the beta clamp from PolIII. In Halalkalibacterium halodurans (strain ATCC BAA-125 / DSM 18197 / FERM 7344 / JCM 9153 / C-125) (Bacillus halodurans), this protein is DNA polymerase IV 2 (dinB2).